Here is a 201-residue protein sequence, read N- to C-terminus: MPKYYCEYCDIYLTHSSPVGRRQHNQGRKHISAKIEYFQNLLREEGITPQNFLGFLGNQGYNNALANPMMNNFMPGNYNAYMKYNPMRNYHHSNRNPNYQHSIGMHNNKYSRAGYVPPGSNKYPNNHFHNNKRINNIQKPYNNFDNKNNNYNNKPITNSSYKNDKQDYRNNNENNDNMNSNHFSNYQMNKENANFVNKNNE.

Residues 4–36 (YYCEYCDIYLTHSSPVGRRQHNQGRKHISAKIE) form a Matrin-type zinc finger. The span at 137–154 (IQKPYNNFDNKNNNYNNK) shows a compositional bias: low complexity. A disordered region spans residues 137–176 (IQKPYNNFDNKNNNYNNKPITNSSYKNDKQDYRNNNENND).

Belongs to the U1 small nuclear ribonucleoprotein C family. In terms of assembly, U1 snRNP is composed of the 7 core Sm proteins B/B', D1, D2, D3, E, F and G that assemble in a heptameric protein ring on the Sm site of the small nuclear RNA to form the core snRNP, and at least 3 U1 snRNP-specific proteins U1-70K, U1-A and U1-C. U1-C interacts with U1 snRNA and the 5' splice-site region of the pre-mRNA.

It localises to the nucleus. Its function is as follows. Component of the spliceosomal U1 snRNP, which is essential for recognition of the pre-mRNA 5' splice-site and the subsequent assembly of the spliceosome. U1-C is directly involved in initial 5' splice-site recognition for both constitutive and regulated alternative splicing. The interaction with the 5' splice-site seems to precede base-pairing between the pre-mRNA and the U1 snRNA. Stimulates commitment or early (E) complex formation by stabilizing the base pairing of the 5' end of the U1 snRNA and the 5' splice-site region. This Plasmodium yoelii yoelii protein is U1 small nuclear ribonucleoprotein C.